The chain runs to 98 residues: NADH-ubiquinone oxidoreductase chain 4L (98 aa).

A run of 3 helical transmembrane segments spans residues 1–21, 29–49, and 59–79; these read MTLIHMNIFMAFTMSLTGFLM, ALLCLEGMILSLFILVTLTVL, and MPIILLVFAACEAAIGLALLV.

It belongs to the complex I subunit 4L family. Core subunit of respiratory chain NADH dehydrogenase (Complex I) which is composed of 45 different subunits.

Its subcellular location is the mitochondrion inner membrane. The enzyme catalyses a ubiquinone + NADH + 5 H(+)(in) = a ubiquinol + NAD(+) + 4 H(+)(out). Its function is as follows. Core subunit of the mitochondrial membrane respiratory chain NADH dehydrogenase (Complex I) which catalyzes electron transfer from NADH through the respiratory chain, using ubiquinone as an electron acceptor. Part of the enzyme membrane arm which is embedded in the lipid bilayer and involved in proton translocation. This chain is NADH-ubiquinone oxidoreductase chain 4L (MT-ND4L), found in Inia geoffrensis (Amazon river dolphin).